A 429-amino-acid chain; its full sequence is Gamma-glutamyl phosphate reductase (429 aa).

Belongs to the gamma-glutamyl phosphate reductase family.

It is found in the cytoplasm. The enzyme catalyses L-glutamate 5-semialdehyde + phosphate + NADP(+) = L-glutamyl 5-phosphate + NADPH + H(+). The protein operates within amino-acid biosynthesis; L-proline biosynthesis; L-glutamate 5-semialdehyde from L-glutamate: step 2/2. Functionally, catalyzes the NADPH-dependent reduction of L-glutamate 5-phosphate into L-glutamate 5-semialdehyde and phosphate. The product spontaneously undergoes cyclization to form 1-pyrroline-5-carboxylate. The polypeptide is Gamma-glutamyl phosphate reductase (Sphingopyxis alaskensis (strain DSM 13593 / LMG 18877 / RB2256) (Sphingomonas alaskensis)).